The sequence spans 349 residues: 26S proteasome non-ATPase regulatory subunit 4 (349 aa).

Residues 5–188 (ATIVCLDNSE…LSDIILQSPI (184 aa)) form the VWFA domain. Positions 204 to 223 (DTDPDLAMALKLSLEEEKQR) constitute a UIM 1 domain. Over residues 219–234 (EEKQRQERERKAREEA) the composition is skewed to basic and acidic residues. Disordered stretches follow at residues 219–257 (EEKQ…MDVN) and 274–349 (TDKM…NEKK). Positions 235–253 (NGGSTNSGTTTTTAPTESN) are enriched in low complexity. Residues 259–278 (EDDPELAEALALSMATDKME) form the UIM 2 domain. Residues 280-301 (QSSTTNTDSQPPQQQQQPPTDD) are compositionally biased toward low complexity. Residues 335-349 (LSKKDEDKDKDNEKK) are compositionally biased toward basic and acidic residues.

Belongs to the proteasome subunit S5A family. As to quaternary structure, the 26S proteasome is composed of a core protease, known as the 20S proteasome, capped at one or both ends by the 19S regulatory complex (RC). The RC is composed of at least 18 different subunits in two subcomplexes, the base and the lid, which form the portions proximal and distal to the 20S proteolytic core, respectively.

Functionally, binds and presumably selects ubiquitin-conjugates for destruction. This chain is 26S proteasome non-ATPase regulatory subunit 4 (psmD4), found in Dictyostelium discoideum (Social amoeba).